The following is a 127-amino-acid chain: uncharacterized protein (127 aa).

Helical transmembrane passes span Gly64–Leu84 and Phe101–Tyr118.

It is found in the membrane. This is an uncharacterized protein from Saccharomyces cerevisiae (strain ATCC 204508 / S288c) (Baker's yeast).